The following is a 251-amino-acid chain: Zinc import ATP-binding protein ZnuC (251 aa).

An ABC transporter domain is found at 5–220; the sequence is VSLENVSVSF…PEFISMFGPR (216 aa). ATP is bound at residue 37–44; sequence GPNGAGKS.

The protein belongs to the ABC transporter superfamily. Zinc importer (TC 3.A.1.15.5) family. The complex is composed of two ATP-binding proteins (ZnuC), two transmembrane proteins (ZnuB) and a solute-binding protein (ZnuA).

Its subcellular location is the cell inner membrane. It catalyses the reaction Zn(2+)(out) + ATP(in) + H2O(in) = Zn(2+)(in) + ADP(in) + phosphate(in) + H(+)(in). Part of the ABC transporter complex ZnuABC involved in zinc import. Responsible for energy coupling to the transport system. This Shigella flexneri serotype 5b (strain 8401) protein is Zinc import ATP-binding protein ZnuC.